The sequence spans 91 residues: Transcription factor ILI7 (91 aa).

A bHLH domain is found at 4 to 58; that stretch reads RSRSRASSAARITDEQIGDLVSKLQALLPEARLRSNDRVPSARVLQETCSYIRSL.

Belongs to the bHLH protein family.

Atypical and probable non DNA-binding bHLH transcription factor that integrates multiple signaling pathways to regulate cell elongation and plant development. The polypeptide is Transcription factor ILI7 (ILI7) (Oryza sativa subsp. indica (Rice)).